The sequence spans 28 residues: Conotoxin Vi14b (28 aa).

2 disulfides stabilise this stretch: C4–C21 and C7–C18. N6-acetyllysine is present on residues K15 and K25.

Post-translationally, the two N6-acetyllysines at position 15 and 25 have been deduced from the mass difference of 42. They are not common in venom proteins. As to expression, expressed by the venom gland.

The protein resides in the secreted. Functionally, in vitro, inhibits proliferation of the mice ovarian cancer cells ID8. The polypeptide is Conotoxin Vi14b (Conus virgo (Virgin cone)).